A 301-amino-acid polypeptide reads, in one-letter code: Glutathione transport system permease protein GsiD (301 aa).

The next 6 helical transmembrane spans lie at 37-57, 103-123, 141-161, 162-182, 220-240, and 264-284; these read VAVA…WAQY, LAAG…LGLL, VLFA…MGSG, MANV…RLVR, IVVF…SLSF, and VIAP…VLAF. The ABC transmembrane type-1 domain maps to 99–288; sequence TRISLAAGIF…LTVLAFNLLG (190 aa).

This sequence belongs to the binding-protein-dependent transport system permease family. The complex is composed of two ATP-binding proteins (GsiA), two transmembrane proteins (GsiC and GsiD) and a solute-binding protein (GsiB).

It localises to the cell inner membrane. Part of the ABC transporter complex GsiABCD involved in glutathione import. Probably responsible for the translocation of the substrate across the membrane. This chain is Glutathione transport system permease protein GsiD, found in Pectobacterium atrosepticum (strain SCRI 1043 / ATCC BAA-672) (Erwinia carotovora subsp. atroseptica).